The sequence spans 436 residues: Enolase (436 aa).

2 residues coordinate substrate: histidine 159 and glutamate 168. Glutamate 211 functions as the Proton donor in the catalytic mechanism. The Mg(2+) site is built by aspartate 246, glutamate 295, and aspartate 320. Residues glutamate 295 and aspartate 320 each contribute to the substrate site. Lysine 345 (proton acceptor) is an active-site residue. Substrate is bound by residues 372 to 375 (SHRS) and lysine 396.

It belongs to the enolase family. As to quaternary structure, homodimer. Mg(2+) is required as a cofactor.

The protein localises to the cytoplasm. The catalysed reaction is (2R)-2-phosphoglycerate = phosphoenolpyruvate + H2O. Its pathway is carbohydrate degradation; glycolysis; pyruvate from D-glyceraldehyde 3-phosphate: step 4/5. This is Enolase from Cunninghamella elegans.